We begin with the raw amino-acid sequence, 182 residues long: Large ribosomal subunit protein uL6 (182 aa).

Belongs to the universal ribosomal protein uL6 family. In terms of assembly, part of the 50S ribosomal subunit.

Functionally, this protein binds to the 23S rRNA, and is important in its secondary structure. It is located near the subunit interface in the base of the L7/L12 stalk, and near the tRNA binding site of the peptidyltransferase center. The sequence is that of Large ribosomal subunit protein uL6 from Methanocaldococcus jannaschii (strain ATCC 43067 / DSM 2661 / JAL-1 / JCM 10045 / NBRC 100440) (Methanococcus jannaschii).